The following is a 257-amino-acid chain: GTP cyclohydrolase FolE2 (257 aa).

This sequence belongs to the GTP cyclohydrolase IV family.

It carries out the reaction GTP + H2O = 7,8-dihydroneopterin 3'-triphosphate + formate + H(+). It functions in the pathway cofactor biosynthesis; 7,8-dihydroneopterin triphosphate biosynthesis; 7,8-dihydroneopterin triphosphate from GTP: step 1/1. Functionally, converts GTP to 7,8-dihydroneopterin triphosphate. This chain is GTP cyclohydrolase FolE2, found in Pelobacter propionicus (strain DSM 2379 / NBRC 103807 / OttBd1).